The sequence spans 391 residues: tRNA (cytosine(38)-C(5))-methyltransferase (391 aa).

An SAM-dependent MTase C5-type domain is found at 4–391; that stretch reads LRALELYSGI…VAKLIKILCD (388 aa). S-adenosyl-L-methionine is bound by residues 13-15, D34, 57-58, and S76; these read IGG and IE. The active site involves C79. S376 contacts S-adenosyl-L-methionine.

It belongs to the class I-like SAM-binding methyltransferase superfamily. C5-methyltransferase family.

The protein resides in the cytoplasm. It carries out the reaction cytidine(38) in tRNA + S-adenosyl-L-methionine = 5-methylcytidine(38) in tRNA + S-adenosyl-L-homocysteine + H(+). In terms of biological role, specifically methylates cytosine 38 in the anticodon loop of tRNA(Asp). Has higher activity on tRNA(Asp) modified with queuosine at position 34. The protein is tRNA (cytosine(38)-C(5))-methyltransferase (TRDMT1) of Bos taurus (Bovine).